The chain runs to 332 residues: UDP-3-O-acylglucosamine N-acyltransferase (332 aa).

Residue His-231 is the Proton acceptor of the active site.

The protein belongs to the transferase hexapeptide repeat family. LpxD subfamily. Homotrimer.

It catalyses the reaction a UDP-3-O-[(3R)-3-hydroxyacyl]-alpha-D-glucosamine + a (3R)-hydroxyacyl-[ACP] = a UDP-2-N,3-O-bis[(3R)-3-hydroxyacyl]-alpha-D-glucosamine + holo-[ACP] + H(+). It functions in the pathway bacterial outer membrane biogenesis; LPS lipid A biosynthesis. Catalyzes the N-acylation of UDP-3-O-acylglucosamine using 3-hydroxyacyl-ACP as the acyl donor. Is involved in the biosynthesis of lipid A, a phosphorylated glycolipid that anchors the lipopolysaccharide to the outer membrane of the cell. The chain is UDP-3-O-acylglucosamine N-acyltransferase from Ruthia magnifica subsp. Calyptogena magnifica.